The following is a 168-amino-acid chain: Photosystem I assembly protein Ycf3 (168 aa).

TPR repeat units follow at residues 35–68 (AFTY…EMDP), 72–105 (SYIL…NPFL), and 120–153 (GEQA…TPGN).

This sequence belongs to the Ycf3 family.

It is found in the plastid. The protein resides in the chloroplast thylakoid membrane. Essential for the assembly of the photosystem I (PSI) complex. May act as a chaperone-like factor to guide the assembly of the PSI subunits. This chain is Photosystem I assembly protein Ycf3, found in Plantago lanceolata (English plantain).